Reading from the N-terminus, the 500-residue chain is Protein O-glucosyltransferase 2 (500 aa).

Residues 1–22 form the signal peptide; that stretch reads MLRKLLLLLMSCIIFLTRRSKA. The Filamin repeat unit spans residues 23-128; it reads AAAASASKTL…LVGKSPYVLR (106 aa). N-linked (GlcNAc...) asparagine glycosylation is found at N60 and N259. Positions 497 to 500 match the Prevents secretion from ER motif; the sequence is RDEL.

Belongs to the KDELC family.

It is found in the endoplasmic reticulum lumen. It carries out the reaction L-seryl-[EGF-like domain protein] + UDP-alpha-D-glucose = 3-O-(beta-D-glucosyl)-L-seryl-[EGF-like domain protein] + UDP + H(+). It catalyses the reaction L-seryl-[EGF-like domain protein] + UDP-alpha-D-xylose = 3-O-(beta-D-xylosyl)-L-seryl-[EGF-like domain protein] + UDP + H(+). The protein operates within protein modification; protein glycosylation. Functionally, protein glucosyltransferase that catalyzes the transfer of glucose from UDP-glucose to a serine residue within the consensus sequence peptide C-X-N-T-X-G-S-F-X-C. Can also catalyze the transfer of xylose from UDP-xylose but less efficiently. In Danio rerio (Zebrafish), this protein is Protein O-glucosyltransferase 2 (poglut2).